Here is a 304-residue protein sequence, read N- to C-terminus: N-acetyl-D-glucosamine kinase (304 aa).

ATP is bound by residues 4–11 and 133–140; these read GLDIGGTK and GFGGGFVL. Histidine 157, cysteine 178, cysteine 180, and cysteine 185 together coordinate Zn(2+).

Belongs to the ROK (NagC/XylR) family. NagK subfamily.

It catalyses the reaction N-acetyl-D-glucosamine + ATP = N-acetyl-D-glucosamine 6-phosphate + ADP + H(+). It participates in cell wall biogenesis; peptidoglycan recycling. Catalyzes the phosphorylation of N-acetyl-D-glucosamine (GlcNAc) derived from cell-wall degradation, yielding GlcNAc-6-P. The protein is N-acetyl-D-glucosamine kinase of Haemophilus influenzae (strain 86-028NP).